The following is a 1349-amino-acid chain: Membrane-associated phosphatidylinositol transfer protein 2 (1349 aa).

The interval 262 to 344 (EDGEEATELV…RDSDESSDDE (83 aa)) is disordered. Over residues 302–322 (KQWSTSSKSSRSSKRGASPSR) the composition is skewed to low complexity. Phosphoserine occurs at positions 337, 341, 368, and 589. Over residues 618–631 (GGGGGSSGGGGSSG) the composition is skewed to gly residues. The interval 618–671 (GGGGGSSGGGGSSGGSSLESSRHLSRSNVDIPRSNGTEDPKRQLPRKRSDSSTY) is disordered. Ser644 bears the Phosphoserine mark. Residues 653-667 (GTEDPKRQLPRKRSD) show a composition bias toward basic and acidic residues. Residues Ser700, Ser701, and Ser702 each carry the phosphoserine modification. Positions 715-963 (FDFEITDLFL…VSFLLRQVMR (249 aa)) constitute a DDHD domain. Arg828 carries the omega-N-methylarginine modification. Positions 876–900 (LPAPSPTTPGPHPPARKASPGLERA) are disordered. Residues 878-888 (APSPTTPGPHP) show a composition bias toward pro residues. At Ser1277 the chain carries Phosphoserine. The disordered stretch occupies residues 1296 to 1326 (TISAQPSGPSHRHERTQSQADGEQRGQRSMS).

Belongs to the PtdIns transfer protein family. PI transfer class IIA subfamily. Interacts with PTK2B via its C-terminus. Interacts with CPNE4 (via VWFA domain). In terms of tissue distribution, highly expressed in brain, heart, ovary, testis and thymus. Detected in small intestine, prostate, pancreas, skeletal muscle, liver, colon and placenta.

The protein resides in the endomembrane system. Functionally, catalyzes the transfer of phosphatidylinositol and phosphatidylcholine between membranes (in vitro). Binds calcium ions. The protein is Membrane-associated phosphatidylinositol transfer protein 2 (PITPNM2) of Homo sapiens (Human).